The sequence spans 369 residues: Glutamate 5-kinase (369 aa).

Lys-10 is a binding site for ATP. Substrate is bound by residues Ser-50, Asp-137, and Asn-149. ATP is bound by residues 169 to 170 (TD) and 210 to 216 (TGGMVTK). One can recognise a PUA domain in the interval 276-349 (EGSIFIDEGA…GKHSEEMLAT (74 aa)).

It belongs to the glutamate 5-kinase family.

Its subcellular location is the cytoplasm. It carries out the reaction L-glutamate + ATP = L-glutamyl 5-phosphate + ADP. It participates in amino-acid biosynthesis; L-proline biosynthesis; L-glutamate 5-semialdehyde from L-glutamate: step 1/2. In terms of biological role, catalyzes the transfer of a phosphate group to glutamate to form L-glutamate 5-phosphate. The polypeptide is Glutamate 5-kinase (Desulfitobacterium hafniense (strain Y51)).